We begin with the raw amino-acid sequence, 539 residues long: Keratin, type II cytoskeletal 73 (539 aa).

The segment at Met-1 to Gln-130 is head. The segment at Glu-131–Leu-166 is coil 1A. Residues Glu-131 to Met-444 enclose the IF rod domain. Residues Gln-167–His-185 form a linker 1 region. The tract at residues Ile-186–Met-277 is coil 1B. Residues Gln-278–Ile-301 are linker 12. The tract at residues Ile-302–Glu-440 is coil 2. The tract at residues Glu-441–Arg-539 is tail.

The protein belongs to the intermediate filament family. As to quaternary structure, heterotetramer of two type I and two type II keratins.

In terms of biological role, has a role in hair formation. Specific component of keratin intermediate filaments in the inner root sheath (IRS) of the hair follicle. In Mus musculus (Mouse), this protein is Keratin, type II cytoskeletal 73 (Krt73).